The sequence spans 226 residues: Cytidylate kinase (226 aa).

Position 10-18 (10-18 (GPASSGKST)) interacts with ATP.

It belongs to the cytidylate kinase family. Type 1 subfamily.

The protein resides in the cytoplasm. The catalysed reaction is CMP + ATP = CDP + ADP. The enzyme catalyses dCMP + ATP = dCDP + ADP. This chain is Cytidylate kinase, found in Enterococcus faecalis (strain ATCC 700802 / V583).